Here is a 477-residue protein sequence, read N- to C-terminus: Pentatricopeptide repeat-containing protein At4g14170 (477 aa).

PPR repeat units follow at residues 65-96 (NVVLSSKLVLAYSKLNHLFPTSLSVFWHMPYR), 97-131 (NIFSWNIIIGEFSRSGFASKSIDLFLRMWRESCVR), 133-167 (DDFTLPLILRACSASREAKSGDLIHVLCLKLGFSS), 168-198 (SLFVSSALVIMYVDMGKLLHARKLFDDMPVR), 199-233 (DSVLYTAMFGGYVQQGEAMLGLAMFREMGYSGFAL), 234-264 (DSVVMVSLLMACGQLGALKHGKSVHGWCIRR), 269-299 (GLNLGNAITDMYVKCSILDYAHTVFVNMSRR), 300-334 (DVISWSSLILGYGLDGDVVMSFKLFDEMLKEGIEP), 335-369 (NAVTFLGVLSACAHGGLVEKSWLYFRLMQEYNIVP), and 370-400 (ELKHYASVADCMSRAGLLEEAEKFLEDMPVK). Residues 405 to 477 (VMGAVLSGCK…ISKVPGCSSI (73 aa)) form a type E motif; degenerate region.

This sequence belongs to the PPR family. PCMP-E subfamily.

In Arabidopsis thaliana (Mouse-ear cress), this protein is Pentatricopeptide repeat-containing protein At4g14170 (PCMP-E17).